The primary structure comprises 334 residues: Protein-methionine-sulfoxide reductase catalytic subunit MsrP (334 aa).

The segment at residues 1–44 is a signal peptide (tat-type signal); that stretch reads MKKNQFLKESDVTAESVFFMKRRQVLKALGISATALSLPHAAHA. Mo-molybdopterin contacts are provided by residues N88, 91–92, C146, T181, N233, R238, and 249–251; these read YE and GIK.

It belongs to the MsrP family. Heterodimer of a catalytic subunit (MsrP) and a heme-binding subunit (MsrQ). It depends on Mo-molybdopterin as a cofactor. In terms of processing, predicted to be exported by the Tat system. The position of the signal peptide cleavage has not been experimentally proven.

It localises to the periplasm. The enzyme catalyses L-methionyl-[protein] + a quinone + H2O = L-methionyl-(S)-S-oxide-[protein] + a quinol. It carries out the reaction L-methionyl-[protein] + a quinone + H2O = L-methionyl-(R)-S-oxide-[protein] + a quinol. In terms of biological role, part of the MsrPQ system that repairs oxidized periplasmic proteins containing methionine sulfoxide residues (Met-O), using respiratory chain electrons. Thus protects these proteins from oxidative-stress damage caused by reactive species of oxygen and chlorine generated by the host defense mechanisms. MsrPQ is essential for the maintenance of envelope integrity under bleach stress, rescuing a wide series of structurally unrelated periplasmic proteins from methionine oxidation, including the primary periplasmic chaperone SurA and the lipoprotein Pal. The catalytic subunit MsrP is non-stereospecific, being able to reduce both (R-) and (S-) diastereoisomers of methionine sulfoxide. The protein is Protein-methionine-sulfoxide reductase catalytic subunit MsrP of Escherichia coli (strain K12 / MC4100 / BW2952).